A 612-amino-acid chain; its full sequence is Protein MUK1 (612 aa).

Over residues 40–50 (EDQNDNERSSC) the composition is skewed to basic and acidic residues. A disordered region spans residues 40–66 (EDQNDNERSSCDGDENSTTGERLENNK). Over residues 55–66 (NSTTGERLENNK) the composition is skewed to polar residues. A phosphoserine mark is found at Ser67, Ser163, Ser185, and Ser245. In terms of domain architecture, VPS9 spans 273-414 (TEYNKLLNEK…VEGLTKNDFS (142 aa)). A disordered region spans residues 494-560 (IRSYTPPHPN…SSASLEHGNR (67 aa)). Over residues 503 to 517 (NNTSNNNLHSSNNLN) the composition is skewed to low complexity. A compositionally biased stretch (polar residues) spans 518–529 (IPRSSSQLSMEL). Over residues 530–542 (SNRDTTEMSRDGS) the composition is skewed to basic and acidic residues. The span at 543–554 (RSTSSSSRSSAS) shows a compositional bias: low complexity.

Its subcellular location is the cytoplasm. Putative GTPase-activating protein. The sequence is that of Protein MUK1 (MUK1) from Saccharomyces cerevisiae (strain ATCC 204508 / S288c) (Baker's yeast).